The chain runs to 238 residues: Purine nucleoside phosphorylase DeoD-type (238 aa).

His-4 is a binding site for a purine D-ribonucleoside. Phosphate is bound by residues Gly-20, Arg-24, Arg-43, and 87–90 (RIGS). Residues 181-183 (EME) and 205-206 (SD) contribute to the a purine D-ribonucleoside site. Asp-206 (proton donor) is an active-site residue.

The protein belongs to the PNP/UDP phosphorylase family. Homohexamer; trimer of homodimers.

The catalysed reaction is a purine D-ribonucleoside + phosphate = a purine nucleobase + alpha-D-ribose 1-phosphate. It catalyses the reaction a purine 2'-deoxy-D-ribonucleoside + phosphate = a purine nucleobase + 2-deoxy-alpha-D-ribose 1-phosphate. In terms of biological role, catalyzes the reversible phosphorolytic breakdown of the N-glycosidic bond in the beta-(deoxy)ribonucleoside molecules, with the formation of the corresponding free purine bases and pentose-1-phosphate. The polypeptide is Purine nucleoside phosphorylase DeoD-type (Mycoplasma pneumoniae (strain ATCC 29342 / M129 / Subtype 1) (Mycoplasmoides pneumoniae)).